A 415-amino-acid polypeptide reads, in one-letter code: 1-deoxy-D-xylulose 5-phosphate reductoisomerase (415 aa).

NADPH contacts are provided by T10, G11, S12, I13, G36, R37, N38, and N128. K129 lines the 1-deoxy-D-xylulose 5-phosphate pocket. An NADPH-binding site is contributed by E130. Mn(2+) is bound at residue D154. 4 residues coordinate 1-deoxy-D-xylulose 5-phosphate: S155, E156, S192, and H215. Residue E156 coordinates Mn(2+). G221 contacts NADPH. 1-deoxy-D-xylulose 5-phosphate-binding residues include S228, N233, K234, and E237. Mn(2+) is bound at residue E237.

Belongs to the DXR family. Requires Mg(2+) as cofactor. Mn(2+) is required as a cofactor.

The enzyme catalyses 2-C-methyl-D-erythritol 4-phosphate + NADP(+) = 1-deoxy-D-xylulose 5-phosphate + NADPH + H(+). The protein operates within isoprenoid biosynthesis; isopentenyl diphosphate biosynthesis via DXP pathway; isopentenyl diphosphate from 1-deoxy-D-xylulose 5-phosphate: step 1/6. Its function is as follows. Catalyzes the NADPH-dependent rearrangement and reduction of 1-deoxy-D-xylulose-5-phosphate (DXP) to 2-C-methyl-D-erythritol 4-phosphate (MEP). This is 1-deoxy-D-xylulose 5-phosphate reductoisomerase from Synechococcus sp. (strain CC9605).